The primary structure comprises 355 residues: Agamous-like MADS-box protein AGL81 (355 aa).

Positions 1–22 (MAIRSLPSSSRCSSSSSSSSYS) are disordered. Residues 26 to 68 (TSLSNRLETIFKKASELCTLCDIEACVIYYGPDGELKTWPPER) enclose the MADS-box domain. A compositionally biased stretch (basic and acidic residues) spans 162 to 174 (VESQKHKETKPDH). The interval 162 to 186 (VESQKHKETKPDHQSLASSSLNHQT) is disordered. Positions 176–186 (SLASSSLNHQT) are enriched in polar residues.

Interacts with MEE14/CBP1.

Its subcellular location is the nucleus. Its function is as follows. Probable transcription factor that may function in the maintenance of the proper function of the central cell in pollen tube attraction. This chain is Agamous-like MADS-box protein AGL81, found in Arabidopsis thaliana (Mouse-ear cress).